Reading from the N-terminus, the 263-residue chain is tRNA pseudouridine synthase A (263 aa).

The active-site Nucleophile is the Asp51. Tyr106 is a substrate binding site.

The protein belongs to the tRNA pseudouridine synthase TruA family.

It carries out the reaction uridine(38/39/40) in tRNA = pseudouridine(38/39/40) in tRNA. Functionally, formation of pseudouridine at positions 38, 39 and 40 in the anticodon stem and loop of transfer RNAs. This chain is tRNA pseudouridine synthase A, found in Pyrococcus abyssi (strain GE5 / Orsay).